The sequence spans 317 residues: uncharacterized protein (317 aa).

Belongs to the asfivirus F317L family.

It is found in the virion. This is an uncharacterized protein from African swine fever virus (isolate Tick/South Africa/Pretoriuskop Pr4/1996) (ASFV).